We begin with the raw amino-acid sequence, 278 residues long: Shikimate dehydrogenase (NADP(+)) (278 aa).

Residues 19–21 (SFS) and Thr66 each bind shikimate. The active-site Proton acceptor is Lys70. The shikimate site is built by Asn91 and Asp106. NADP(+)-binding positions include 130-134 (GSGGA) and Leu222. Tyr224 is a shikimate binding site. Gly245 is an NADP(+) binding site.

This sequence belongs to the shikimate dehydrogenase family. As to quaternary structure, homodimer.

It carries out the reaction shikimate + NADP(+) = 3-dehydroshikimate + NADPH + H(+). It functions in the pathway metabolic intermediate biosynthesis; chorismate biosynthesis; chorismate from D-erythrose 4-phosphate and phosphoenolpyruvate: step 4/7. Its function is as follows. Involved in the biosynthesis of the chorismate, which leads to the biosynthesis of aromatic amino acids. Catalyzes the reversible NADPH linked reduction of 3-dehydroshikimate (DHSA) to yield shikimate (SA). This chain is Shikimate dehydrogenase (NADP(+)), found in Methanococcus maripaludis (strain DSM 14266 / JCM 13030 / NBRC 101832 / S2 / LL).